Here is a 227-residue protein sequence, read N- to C-terminus: PKHD-type hydroxylase BTH_II1201 (227 aa).

The Fe2OG dioxygenase domain occupies 78-178 (KVFPPLFNRY…RVASFFWIQS (101 aa)). Residues histidine 96, aspartate 98, and histidine 159 each contribute to the Fe cation site. Residue arginine 169 coordinates 2-oxoglutarate.

It depends on Fe(2+) as a cofactor. Requires L-ascorbate as cofactor.

This Burkholderia thailandensis (strain ATCC 700388 / DSM 13276 / CCUG 48851 / CIP 106301 / E264) protein is PKHD-type hydroxylase BTH_II1201.